A 208-amino-acid polypeptide reads, in one-letter code: FMN-dependent NADH:quinone oxidoreductase (208 aa).

FMN is bound by residues 17–19 (SNS), 99–102 (MWNL), and 143–146 (SRGG).

Belongs to the azoreductase type 1 family. In terms of assembly, homodimer. Requires FMN as cofactor.

The catalysed reaction is 2 a quinone + NADH + H(+) = 2 a 1,4-benzosemiquinone + NAD(+). The enzyme catalyses N,N-dimethyl-1,4-phenylenediamine + anthranilate + 2 NAD(+) = 2-(4-dimethylaminophenyl)diazenylbenzoate + 2 NADH + 2 H(+). Its function is as follows. Quinone reductase that provides resistance to thiol-specific stress caused by electrophilic quinones. In terms of biological role, also exhibits azoreductase activity. Catalyzes the reductive cleavage of the azo bond in aromatic azo compounds to the corresponding amines. This chain is FMN-dependent NADH:quinone oxidoreductase, found in Staphylococcus aureus (strain Mu50 / ATCC 700699).